Here is an 808-residue protein sequence, read N- to C-terminus: uncharacterized protein (808 aa).

The EF-hand 1 domain occupies 6-41; the sequence is SRSEKVKRIFQQFDGNHDGGLNREEMAALVVAVNPR. TPR repeat units follow at residues 234–267, 269–301, 310–343, 344–377, 378–411, 412–445, and 447–479; these read FDGH…QPTD, RPHF…AESG, PQIY…CPTH, FRAL…KPDY, ADAH…KPGH, VDAL…WPNH, and RAQL…TNRV. Positions 600–635 constitute an EF-hand 2 domain; the sequence is AIKAINEKILALLDDSGSGRVDMGMFYAVIAPLCGG. A coiled-coil region spans residues 773–794; sequence FKQEEYKFREYESEAEAMKAKC.

This is an uncharacterized protein from Arabidopsis thaliana (Mouse-ear cress).